We begin with the raw amino-acid sequence, 53 residues long: UPF0391 membrane protein Bxeno_A1464 (53 aa).

2 helical membrane-spanning segments follow: residues 5–25 (AAIFFIIAIIAAVFGFGGIAA) and 30–50 (IAKVLFFIFVVIFLVTLLMGV).

The protein belongs to the UPF0391 family.

The protein resides in the cell membrane. The polypeptide is UPF0391 membrane protein Bxeno_A1464 (Paraburkholderia xenovorans (strain LB400)).